The chain runs to 277 residues: Large ribosomal subunit protein uL2 (277 aa).

Disordered stretches follow at residues 32–58 (KSLT…RGGG) and 225–277 (VAMN…RRNK). Residues 258–277 (YKTRKKKRYSDKFIIKRRNK) show a composition bias toward basic residues.

It belongs to the universal ribosomal protein uL2 family. In terms of assembly, part of the 50S ribosomal subunit. Forms a bridge to the 30S subunit in the 70S ribosome.

Functionally, one of the primary rRNA binding proteins. Required for association of the 30S and 50S subunits to form the 70S ribosome, for tRNA binding and peptide bond formation. It has been suggested to have peptidyltransferase activity; this is somewhat controversial. Makes several contacts with the 16S rRNA in the 70S ribosome. This Borreliella afzelii (strain PKo) (Borrelia afzelii) protein is Large ribosomal subunit protein uL2.